A 618-amino-acid chain; its full sequence is 1-deoxy-D-xylulose-5-phosphate synthase (618 aa).

Thiamine diphosphate contacts are provided by residues His-72 and 113-115 (GHA). Asp-144 contributes to the Mg(2+) binding site. Residues 145–146 (GA), Asn-173, His-284, and Glu-359 each bind thiamine diphosphate. Asn-173 serves as a coordination point for Mg(2+).

The protein belongs to the transketolase family. DXPS subfamily. In terms of assembly, homodimer. Requires Mg(2+) as cofactor. Thiamine diphosphate serves as cofactor.

The enzyme catalyses D-glyceraldehyde 3-phosphate + pyruvate + H(+) = 1-deoxy-D-xylulose 5-phosphate + CO2. The protein operates within metabolic intermediate biosynthesis; 1-deoxy-D-xylulose 5-phosphate biosynthesis; 1-deoxy-D-xylulose 5-phosphate from D-glyceraldehyde 3-phosphate and pyruvate: step 1/1. Its function is as follows. Catalyzes the acyloin condensation reaction between C atoms 2 and 3 of pyruvate and glyceraldehyde 3-phosphate to yield 1-deoxy-D-xylulose-5-phosphate (DXP). This Dictyoglomus turgidum (strain DSM 6724 / Z-1310) protein is 1-deoxy-D-xylulose-5-phosphate synthase.